We begin with the raw amino-acid sequence, 564 residues long: Adenine deaminase (564 aa).

The protein belongs to the metallo-dependent hydrolases superfamily. Adenine deaminase family. Requires Mn(2+) as cofactor.

The enzyme catalyses adenine + H2O + H(+) = hypoxanthine + NH4(+). This Methylobacterium sp. (strain 4-46) protein is Adenine deaminase.